The sequence spans 219 residues: Thiamine-phosphate synthase (219 aa).

4-amino-2-methyl-5-(diphosphooxymethyl)pyrimidine contacts are provided by residues 44 to 48 (QFREK) and Asn-79. 2 residues coordinate Mg(2+): Asp-80 and Asp-99. 4-amino-2-methyl-5-(diphosphooxymethyl)pyrimidine is bound at residue Ser-117. Position 143–145 (143–145 (TST)) interacts with 2-[(2R,5Z)-2-carboxy-4-methylthiazol-5(2H)-ylidene]ethyl phosphate. Lys-146 is a binding site for 4-amino-2-methyl-5-(diphosphooxymethyl)pyrimidine. Residues Gly-175 and 195–196 (IS) contribute to the 2-[(2R,5Z)-2-carboxy-4-methylthiazol-5(2H)-ylidene]ethyl phosphate site.

Belongs to the thiamine-phosphate synthase family. Mg(2+) serves as cofactor.

The enzyme catalyses 2-[(2R,5Z)-2-carboxy-4-methylthiazol-5(2H)-ylidene]ethyl phosphate + 4-amino-2-methyl-5-(diphosphooxymethyl)pyrimidine + 2 H(+) = thiamine phosphate + CO2 + diphosphate. It catalyses the reaction 2-(2-carboxy-4-methylthiazol-5-yl)ethyl phosphate + 4-amino-2-methyl-5-(diphosphooxymethyl)pyrimidine + 2 H(+) = thiamine phosphate + CO2 + diphosphate. It carries out the reaction 4-methyl-5-(2-phosphooxyethyl)-thiazole + 4-amino-2-methyl-5-(diphosphooxymethyl)pyrimidine + H(+) = thiamine phosphate + diphosphate. Its pathway is cofactor biosynthesis; thiamine diphosphate biosynthesis; thiamine phosphate from 4-amino-2-methyl-5-diphosphomethylpyrimidine and 4-methyl-5-(2-phosphoethyl)-thiazole: step 1/1. Its function is as follows. Condenses 4-methyl-5-(beta-hydroxyethyl)thiazole monophosphate (THZ-P) and 2-methyl-4-amino-5-hydroxymethyl pyrimidine pyrophosphate (HMP-PP) to form thiamine monophosphate (TMP). The polypeptide is Thiamine-phosphate synthase (Bacillus cereus (strain ATCC 14579 / DSM 31 / CCUG 7414 / JCM 2152 / NBRC 15305 / NCIMB 9373 / NCTC 2599 / NRRL B-3711)).